Here is a 310-residue protein sequence, read N- to C-terminus: MNTQTRETTSMSDAQDKAGTLIEALPWIQRFAGTTMVIKYGGNAMVNDELRRAFAEDVVFLHHVGIHPVVVHGGGPQINAMLSRLGIESEFKGGLRVTTPEAMDVVRMVLTGQVGRELVGLINSHGPYAVGMSGEDGGLLRAVRTGTVVDGEEVDLGLVGEVVGVNPEGIVDILAAGRIPVISTVAPEIADDGSTTGQVLNVNADTAAAAVASALGASKLVILTDVEGLYANWPDKSSLISSLTASELREMLPRLESGMIPKMAACLQAVDDGVERAHIVDGRLPHSMLLETFTTAGIGTQVVPDEETNA.

Substrate is bound by residues 74–75 (GG), Arg96, and Asn201.

Belongs to the acetylglutamate kinase family. ArgB subfamily.

Its subcellular location is the cytoplasm. It carries out the reaction N-acetyl-L-glutamate + ATP = N-acetyl-L-glutamyl 5-phosphate + ADP. It functions in the pathway amino-acid biosynthesis; L-arginine biosynthesis; N(2)-acetyl-L-ornithine from L-glutamate: step 2/4. Catalyzes the ATP-dependent phosphorylation of N-acetyl-L-glutamate. The polypeptide is Acetylglutamate kinase (Arthrobacter sp. (strain FB24)).